Reading from the N-terminus, the 635-residue chain is Phosphatidylserine decarboxylase proenzyme 2 (635 aa).

The C2 domain occupies 20–146; it reads KLQKFRIHRR…VVQEPESTCK (127 aa). EF-hand domains follow at residues 174-209 and 210-245; these read TERRFAKRILSIVDYNEDGQLSFSEFSDLIKAFGNL and VAANKKEELFKAADLNGDGVVTIDELAALLALQQEQ. Ca(2+) is bound by residues D187, N189, D191, Q193, E198, D223, N225, D227, and E234. Catalysis depends on charge relay system; for autoendoproteolytic cleavage activity residues D443, H499, and S587. S587 acts as the Schiff-base intermediate with substrate; via pyruvic acid; for decarboxylase activity in catalysis. At S587 the chain carries Pyruvic acid (Ser); by autocatalysis.

This sequence belongs to the phosphatidylserine decarboxylase family. PSD-B subfamily. Eukaryotic type II sub-subfamily. Heterodimer of a large membrane-associated beta subunit and a small pyruvoyl-containing alpha subunit. It depends on pyruvate as a cofactor. Is synthesized initially as an inactive proenzyme. Formation of the active enzyme involves a self-maturation process in which the active site pyruvoyl group is generated from an internal serine residue via an autocatalytic post-translational modification. Two non-identical subunits are generated from the proenzyme in this reaction, and the pyruvate is formed at the N-terminus of the alpha chain, which is derived from the carboxyl end of the proenzyme. The autoendoproteolytic cleavage occurs by a canonical serine protease mechanism, in which the side chain hydroxyl group of the serine supplies its oxygen atom to form the C-terminus of the beta chain, while the remainder of the serine residue undergoes an oxidative deamination to produce ammonia and the pyruvoyl prosthetic group on the alpha chain. During this reaction, the Ser that is part of the protease active site of the proenzyme becomes the pyruvoyl prosthetic group, which constitutes an essential element of the active site of the mature decarboxylase. As to expression, highly expressed in flowers and at lower levels in leaves.

The protein resides in the vacuole membrane. The enzyme catalyses a 1,2-diacyl-sn-glycero-3-phospho-L-serine + H(+) = a 1,2-diacyl-sn-glycero-3-phosphoethanolamine + CO2. It participates in phospholipid metabolism; phosphatidylethanolamine biosynthesis; phosphatidylethanolamine from CDP-diacylglycerol: step 2/2. Functionally, catalyzes the formation of phosphatidylethanolamine (PtdEtn) from phosphatidylserine (PtdSer). Plays a central role in phospholipid metabolism and in the interorganelle trafficking of phosphatidylserine. Contributes only to a minor proportion of PtdEtn production. This chain is Phosphatidylserine decarboxylase proenzyme 2 (PSD2), found in Arabidopsis thaliana (Mouse-ear cress).